The following is a 468-amino-acid chain: ATP synthase subunit beta (468 aa).

155-162 contacts ATP; that stretch reads GGAGVGKT.

The protein belongs to the ATPase alpha/beta chains family. F-type ATPases have 2 components, CF(1) - the catalytic core - and CF(0) - the membrane proton channel. CF(1) has five subunits: alpha(3), beta(3), gamma(1), delta(1), epsilon(1). CF(0) has three main subunits: a(1), b(2) and c(9-12). The alpha and beta chains form an alternating ring which encloses part of the gamma chain. CF(1) is attached to CF(0) by a central stalk formed by the gamma and epsilon chains, while a peripheral stalk is formed by the delta and b chains.

The protein localises to the cell membrane. The enzyme catalyses ATP + H2O + 4 H(+)(in) = ADP + phosphate + 5 H(+)(out). Its function is as follows. Produces ATP from ADP in the presence of a proton gradient across the membrane. The catalytic sites are hosted primarily by the beta subunits. The sequence is that of ATP synthase subunit beta from Streptococcus mutans serotype c (strain ATCC 700610 / UA159).